The sequence spans 269 residues: Phosphate import ATP-binding protein PstB 1 (269 aa).

The region spanning leucine 23 to valine 264 is the ABC transporter domain. Glycine 55 to serine 62 provides a ligand contact to ATP.

It belongs to the ABC transporter superfamily. Phosphate importer (TC 3.A.1.7) family. In terms of assembly, the complex is composed of two ATP-binding proteins (PstB), two transmembrane proteins (PstC and PstA) and a solute-binding protein (PstS).

The protein resides in the cell membrane. The catalysed reaction is phosphate(out) + ATP + H2O = ADP + 2 phosphate(in) + H(+). Functionally, part of the ABC transporter complex PstSACB involved in phosphate import. Responsible for energy coupling to the transport system. This Latilactobacillus sakei subsp. sakei (strain 23K) (Lactobacillus sakei subsp. sakei) protein is Phosphate import ATP-binding protein PstB 1.